A 514-amino-acid polypeptide reads, in one-letter code: Antiseptic resistance protein (514 aa).

Residues 1–23 are Cytoplasmic-facing; the sequence is MISFFTKTTDMMTSKKRWTALVV. The chain crosses the membrane as a helical span at residues 24–41; it reads LAVSLFVVTMDMTILIMA. The Extracellular portion of the chain corresponds to 42–57; the sequence is LPELVRELEPSGTQQL. The chain crosses the membrane as a helical span at residues 58 to 75; it reads WIVDIYSLVLAGFIIPLS. Residues 76 to 86 lie on the Cytoplasmic side of the membrane; the sequence is AFADKWGRKKA. Residues 87 to 104 form a helical membrane-spanning segment; the sequence is LLTGFALFGLVSLAIFFA. Over 105–112 the chain is Extracellular; it reads ESAEFVIA. A helical membrane pass occupies residues 113-130; it reads IRFLLGIAGALIMPTTLS. The Cytoplasmic segment spans residues 131–146; it reads MIRVIFENPKERATAL. A helical membrane pass occupies residues 147–164; it reads AVWSIASSIGAVFGPIIG. Over 165 to 172 the chain is Extracellular; the sequence is GALLEQFS. A helical membrane pass occupies residues 173 to 190; sequence WHSAFLINVPFAIIAVVA. At 191-207 the chain is on the cytoplasmic side; the sequence is GLFLLPESKLSKEKSHS. The helical transmembrane segment at 208–225 threads the bilayer; the sequence is WDIPSTILSIAGMIGLVW. Over 226–237 the chain is Extracellular; sequence SIKEFSKEGLAD. A helical transmembrane segment spans residues 238–255; sequence IIPWVVIVLAITMIVIFV. The Cytoplasmic portion of the chain corresponds to 256 to 278; the sequence is KRNLSSSDPMLDVRLFKKRSFSA. The helical transmembrane segment at 279 to 295 threads the bilayer; the sequence is GTIAAFMTMFAMASVLL. Residues 296–315 lie on the Extracellular side of the membrane; that stretch reads LASQWLQVVEELSPFKAGLY. Residues 316 to 333 form a helical membrane-spanning segment; that stretch reads LLPMAIGDMVFAPIAPGL. Residues 334 to 341 lie on the Cytoplasmic side of the membrane; it reads AARFGPKI. Residues 342-360 form a helical membrane-spanning segment; sequence VLPSGIGIAAIGMFIMYFF. Residues 361 to 369 are Extracellular-facing; it reads GHPLSYSTM. The chain crosses the membrane as a helical span at residues 370–387; sequence ALALILVGAGMASLAVAS. Residues 388-408 are Cytoplasmic-facing; sequence ALIMLETPTSKAGNAAAVEES. The helical transmembrane segment at 409 to 426 threads the bilayer; that stretch reads MYDLGNVFGVAVLGSLSS. The Extracellular portion of the chain corresponds to 427–481; sequence MLYRVFLDISSFSSKGIVGDLAHVAEESVVGAVEVAKATGIKQLANEAVTSFNDA. A helical transmembrane segment spans residues 482–499; the sequence is FVATALVGGIIMIIISIV. Topologically, residues 500-514 are cytoplasmic; that stretch reads VYLLIPKSLDITKQK.

This sequence belongs to the major facilitator superfamily.

It is found in the cell membrane. Its function is as follows. Confers export-mediated resistance against antiseptic and disinfectant compounds such as intercalating dyes, quaternary ammonium salts and diamidines. In Staphylococcus aureus (strain Mu50 / ATCC 700699), this protein is Antiseptic resistance protein (qacA).